A 381-amino-acid chain; its full sequence is Succinyl-diaminopimelate desuccinylase (381 aa).

H68 contacts Zn(2+). The active site involves D70. D101 provides a ligand contact to Zn(2+). Catalysis depends on E135, which acts as the Proton acceptor. Zn(2+) contacts are provided by E136, E164, and H350.

This sequence belongs to the peptidase M20A family. DapE subfamily. In terms of assembly, homodimer. Requires Zn(2+) as cofactor. It depends on Co(2+) as a cofactor.

It carries out the reaction N-succinyl-(2S,6S)-2,6-diaminopimelate + H2O = (2S,6S)-2,6-diaminopimelate + succinate. It functions in the pathway amino-acid biosynthesis; L-lysine biosynthesis via DAP pathway; LL-2,6-diaminopimelate from (S)-tetrahydrodipicolinate (succinylase route): step 3/3. Catalyzes the hydrolysis of N-succinyl-L,L-diaminopimelic acid (SDAP), forming succinate and LL-2,6-diaminopimelate (DAP), an intermediate involved in the bacterial biosynthesis of lysine and meso-diaminopimelic acid, an essential component of bacterial cell walls. In Neisseria meningitidis serogroup A / serotype 4A (strain DSM 15465 / Z2491), this protein is Succinyl-diaminopimelate desuccinylase.